The sequence spans 160 residues: uncharacterized protein (160 aa).

The N-acetyltransferase domain maps to 2 to 140 (MIIIPNNEIA…KARRLKPEIP (139 aa)).

This is an uncharacterized protein from Bacillus subtilis (strain 168).